Reading from the N-terminus, the 154-residue chain is Endoribonuclease YbeY (154 aa).

Zn(2+) contacts are provided by histidine 114, histidine 118, and histidine 124.

Belongs to the endoribonuclease YbeY family. Zn(2+) is required as a cofactor.

It localises to the cytoplasm. Its function is as follows. Single strand-specific metallo-endoribonuclease involved in late-stage 70S ribosome quality control and in maturation of the 3' terminus of the 16S rRNA. This Haemophilus influenzae (strain 86-028NP) protein is Endoribonuclease YbeY.